The following is a 1141-amino-acid chain: cGMP-inhibited 3',5'-cyclic phosphodiesterase 3A (1141 aa).

The disordered stretch occupies residues 1-41 (MAVRGEAAQDWAKPGLRGPSPAPVARGDHRCRGGSPSSPRG). Residues 62 to 82 (SALCAGSLSVLLALLVRLVGG) traverse the membrane as a helical segment. The segment at 89 to 111 (ESSQEAAAEEEEEEGARGGVFPG) is disordered. Helical transmembrane passes span 127–147 (LQPAALLFSLLCAFFWMGLCL), 157–177 (AVALLAACCAGEALVQLSLGV), 182–202 (LLSLPAAGVLLSCLGGATWLV), 207–227 (LGVLMVALTSALRTVALVSLE), and 229–249 (FKVAWRPYLAYLAAVLGLLLA). A disordered region spans residues 262–309 (PAPPRERFGSQSSARTKEEIPGWKRRRRSSSVVAGEMSGCGGKSHRRT). Ser310 carries the phosphoserine modification. Low complexity predominate over residues 433 to 445 (RVSSTWTTTTSAT). A disordered region spans residues 433–479 (RVSSTWTTTTSATGLPTLEPAPVRRDRSASIKPHEAPSPSAVNPDSW). Positions 454 to 467 (PVRRDRSASIKPHE) are enriched in basic and acidic residues. A phosphoserine mark is found at Ser492, Ser520, Ser524, and Ser533. The interval 504-643 (HVKAKKQNRP…SDILQNDEEA (140 aa)) is disordered. Over residues 522–532 (VPSPSSSPPQG) the composition is skewed to pro residues. The span at 618–637 (TSQVTSDYETNNNSDSSDIL) shows a compositional bias: polar residues. The segment at 669-1141 (KPILAPEPLV…EETLAPQPDL (473 aa)) is interaction with SLFN12. In terms of domain architecture, PDEase spans 674–1093 (PEPLVMDNLD…MMWKKVIEEE (420 aa)). His752 functions as the Proton donor in the catalytic mechanism. His752 is a binding site for AMP. Residues His756, His836, Asp837, and Asp950 each contribute to the Mn(2+) site. Positions 837, 950, and 1001 each coordinate AMP. Asp837 contacts Mg(2+). Disordered stretches follow at residues 1024–1062 (GKWVDDSDDSGDTDDPEEEEEEAETPHEEETCENSEAPR) and 1098–1141 (GTEN…QPDL). Residues 1029–1046 (DSDDSGDTDDPEEEEEEA) are compositionally biased toward acidic residues. The residue at position 1033 (Ser1033) is a Phosphoserine. Thr1036 is subject to Phosphothreonine. Polar residues predominate over residues 1098 to 1113 (GTENQAPDQAPLQHSS). Residue Lys1120 forms a Glycyl lysine isopeptide (Lys-Gly) (interchain with G-Cter in SUMO2) linkage.

Belongs to the cyclic nucleotide phosphodiesterase family. PDE3 subfamily. In terms of assembly, homodimer. Interacts with PDE3A; direct low affinity interaction which is stimulated by binding of 17beta-estradiol/E2 to PDE3A and that positively regulates the ribonuclease activity of SLFN12. Requires Mn(2+) as cofactor. Mg(2+) serves as cofactor.

It localises to the membrane. The protein resides in the cytoplasm. The protein localises to the cytosol. The catalysed reaction is a nucleoside 3',5'-cyclic phosphate + H2O = a nucleoside 5'-phosphate + H(+). The enzyme catalyses 3',5'-cyclic AMP + H2O = AMP + H(+). It carries out the reaction 3',5'-cyclic GMP + H2O = GMP + H(+). It catalyses the reaction 3',5'-cyclic UMP + H2O = UMP + H(+). Functionally, cyclic nucleotide phosphodiesterase with specificity for the second messengers cAMP and cGMP, which are key regulators of many important physiological processes. Also has activity toward cUMP. Independently of its catalytic activity it is part of an E2/17beta-estradiol-induced pro-apoptotic signaling pathway. E2 stabilizes the PDE3A/SLFN12 complex in the cytosol, promoting the dephosphorylation of SLFN12 and activating its pro-apoptotic ribosomal RNA/rRNA ribonuclease activity. This apoptotic pathway might be relevant in tissues with high concentration of E2 and be for instance involved in placenta remodeling. The chain is cGMP-inhibited 3',5'-cyclic phosphodiesterase 3A from Rattus norvegicus (Rat).